Reading from the N-terminus, the 598-residue chain is Beta-myrcene/(E)-beta-ocimene synthase 2, chloroplastic (598 aa).

The transit peptide at 1-30 (MATLCIGSAPIYQNACIHNFRLQRPRRFIS) directs the protein to the chloroplast. (2E)-geranyl diphosphate-binding residues include R307, D344, D348, R486, and N489. Positions 344 and 348 each coordinate Mg(2+). The DDXXD motif motif lies at 344–348 (DDIYD). The Mg(2+) site is built by N489, T493, and E497.

It belongs to the terpene synthase family. Tpsb subfamily. Mg(2+) is required as a cofactor. It depends on Mn(2+) as a cofactor. In terms of tissue distribution, expressed exclusively in mature flowers, but not in inmmature buds.

The protein resides in the plastid. It is found in the chloroplast. It carries out the reaction (2E)-geranyl diphosphate = beta-myrcene + diphosphate. It functions in the pathway secondary metabolite biosynthesis; terpenoid biosynthesis. Involved in monoterpene (C10) biosynthesis. The major products are alpha- and beta-pinene, sabinene, beta-myrcene, (E)-beta-ocimene and limonene. The sequence is that of Beta-myrcene/(E)-beta-ocimene synthase 2, chloroplastic (TPS24) from Arabidopsis thaliana (Mouse-ear cress).